Consider the following 341-residue polypeptide: N-acetyl-gamma-glutamyl-phosphate reductase (341 aa).

C149 is an active-site residue.

This sequence belongs to the NAGSA dehydrogenase family. Type 1 subfamily.

It is found in the cytoplasm. It catalyses the reaction N-acetyl-L-glutamate 5-semialdehyde + phosphate + NADP(+) = N-acetyl-L-glutamyl 5-phosphate + NADPH + H(+). Its pathway is amino-acid biosynthesis; L-arginine biosynthesis; N(2)-acetyl-L-ornithine from L-glutamate: step 3/4. In terms of biological role, catalyzes the NADPH-dependent reduction of N-acetyl-5-glutamyl phosphate to yield N-acetyl-L-glutamate 5-semialdehyde. This is N-acetyl-gamma-glutamyl-phosphate reductase from Methanocaldococcus jannaschii (strain ATCC 43067 / DSM 2661 / JAL-1 / JCM 10045 / NBRC 100440) (Methanococcus jannaschii).